Consider the following 295-residue polypeptide: MKIAILSRNSKLYSTRRLIEAGRKRGHTVRILDPLRCYMRIAADGFSLHYKGKPITGFDAVIPRIGASVTRYATAVLRQLEFMGTYTPNPSDAILRSRDKLRAHQLLAAQGIDMPVTVFGDNPDDTQDLLSMLGPPPHVVKLNEGAQGAGVILTEKASASRGVVEALRGLYANFIVQEFIGEAEGADLRCFVVGDKVVAAMRRQAAEGDFRSNLHLGGTAAVTEATEQEQEVAVRSARALGLTVAGVDLIRSKRGPLVLEVNSTPGLEGVEGVCGVDVAAAIVQHLEQSVRRSAG.

One can recognise an ATP-grasp domain in the interval 104–287 (HQLLAAQGID…VAAAIVQHLE (184 aa)). ATP is bound by residues K141, 178–179 (EF), D187, and 211–213 (RSN). 3 residues coordinate Mg(2+): D248, E260, and N262. Positions 248, 260, and 262 each coordinate Mn(2+).

Belongs to the RimK family. The cofactor is Mg(2+). Mn(2+) is required as a cofactor.

This chain is Probable alpha-L-glutamate ligase, found in Xanthomonas euvesicatoria pv. vesicatoria (strain 85-10) (Xanthomonas campestris pv. vesicatoria).